A 311-amino-acid chain; its full sequence is Protein N-terminal asparagine amidohydrolase (311 aa).

Monomer.

The protein resides in the cytoplasm. The enzyme catalyses N-terminal L-asparaginyl-[protein] + H2O + H(+) = N-terminal L-aspartyl-[protein] + NH4(+). Functionally, N-terminal asparagine deamidase that mediates deamidation of N-terminal asparagine residues to aspartate. Required for the ubiquitin-dependent turnover of intracellular proteins that initiate with Met-Asn. These proteins are acetylated on the retained initiator methionine and can subsequently be modified by the removal of N-acetyl methionine by acylaminoacid hydrolase (AAH). Conversion of the resulting N-terminal asparagine to aspartate by NTAN1/PNAD renders the protein susceptible to arginylation, polyubiquitination and degradation as specified by the N-end rule. This enzyme does not act on substrates with internal or C-terminal asparagines and does not act on glutamine residues in any position. The chain is Protein N-terminal asparagine amidohydrolase (NTAN1) from Sus scrofa (Pig).